Reading from the N-terminus, the 615-residue chain is Deoxyribodipyrimidine photo-lyase (615 aa).

The segment at Met1–Lys53 is disordered. A compositionally biased stretch (polar residues) spans Pro11–Pro21. Over residues Thr31–Thr40 the composition is skewed to low complexity. The Photolyase/cryptochrome alpha/beta domain occupies Gln108–Val249. Tyr352 provides a ligand contact to FAD. Arg356 lines the DNA pocket. Thr364–Ser368 contacts FAD. 2 interaction with DNA regions span residues Glu407–Tyr414 and Asn474–Arg475. Residue Asp505–Asp507 coordinates FAD. A DNA-binding site is contributed by Gln537.

It belongs to the DNA photolyase class-1 family. Monomer. FAD serves as cofactor. Requires (6R)-5,10-methylene-5,6,7,8-tetrahydrofolate as cofactor.

The catalysed reaction is cyclobutadipyrimidine (in DNA) = 2 pyrimidine residues (in DNA).. Its function is as follows. Involved in repair of UV radiation-induced DNA damage. Catalyzes the light-dependent monomerization (300-600 nm) of cyclobutyl pyrimidine dimers (in cis-syn configuration), which are formed between adjacent bases on the same DNA strand upon exposure to ultraviolet radiation. The sequence is that of Deoxyribodipyrimidine photo-lyase (phr) from Neurospora crassa (strain ATCC 24698 / 74-OR23-1A / CBS 708.71 / DSM 1257 / FGSC 987).